The following is a 110-amino-acid chain: uncharacterized protein (110 aa).

A helical transmembrane segment spans residues 88-108; it reads LTRICLLIFGIGLVVLIFLKL.

The protein localises to the membrane. This is an uncharacterized protein from Rickettsia prowazekii (strain Madrid E).